A 201-amino-acid chain; its full sequence is Probable quinol oxidase subunit 3 (201 aa).

Helical transmembrane passes span 20 to 40, 62 to 82, 91 to 111, 133 to 153, and 172 to 192; these read LGFW…FATL, LILI…IAIY, LMMF…GFEI, FFIL…WVIC, and FIVS…FTAV.

It belongs to the cytochrome c oxidase subunit 3 family.

Its subcellular location is the cell membrane. It catalyses the reaction 2 a quinol + O2 = 2 a quinone + 2 H2O. Functionally, catalyzes quinol oxidation with the concomitant reduction of oxygen to water. The chain is Probable quinol oxidase subunit 3 (qoxC) from Staphylococcus epidermidis (strain ATCC 35984 / DSM 28319 / BCRC 17069 / CCUG 31568 / BM 3577 / RP62A).